Consider the following 327-residue polypeptide: Serpentine receptor class alpha-12 (327 aa).

At 1–18 (MGCASEIQAEIFTSFGQL) the chain is on the extracellular side. A helical membrane pass occupies residues 19-39 (FYASFQTILFLATIIGSLLAI). The Cytoplasmic portion of the chain corresponds to 40 to 53 (FELCKKTTVPDSTR). A helical membrane pass occupies residues 54 to 74 (VLLIGSLFFANAHEFAYFTAP). The Extracellular portion of the chain corresponds to 75–98 (LKVFQLNIFNTNTSCYPLISTRDC). Residues 99 to 119 (IPTTTVLAMGISGNMLIQSAL) traverse the membrane as a helical segment. Over 120–138 (SIDRLLATIFPFSYSRMRA) the chain is Cytoplasmic. The helical transmembrane segment at 139 to 159 (LPGFVLLIMVLIPAMFTYSWI) threads the bilayer. The Extracellular portion of the chain corresponds to 160 to 185 (RLDIVLDDYQMFCSQWSANISTRANT). The helical transmembrane segment at 186-206 (FLEICSYLTVAHIIINCLIIL) threads the bilayer. Residues 207-234 (RNRAIEKRCRFDVTQRYLTSENLKTTQA) lie on the Cytoplasmic side of the membrane. A helical transmembrane segment spans residues 235 to 255 (ICYLSIAQFLAMFMYSGGVLL). Residues 256–270 (MRKNRENIPTLIYFN) are Extracellular-facing. The helical transmembrane segment at 271 to 291 (VIVWVYAPPYACVSLAPLILF) threads the bilayer. The Cytoplasmic segment spans residues 292-327 (SLWNLKKQRHIQIKSVQSAQKETQDDYIRKLQKSWK).

The protein belongs to the nematode receptor-like protein sra family. As to expression, expressed in neurons RIF/RIG and PVT.

It is found in the membrane. This chain is Serpentine receptor class alpha-12 (sra-12), found in Caenorhabditis elegans.